A 451-amino-acid chain; its full sequence is tRNA modification GTPase MnmE (451 aa).

(6S)-5-formyl-5,6,7,8-tetrahydrofolate contacts are provided by Arg28, Glu85, and Lys124. The region spanning 220-377 (GMNVVLVGQP…LRSELLRVAG (158 aa)) is the TrmE-type G domain. Asn230 is a binding site for K(+). Residues 230–235 (NVGKSS), 249–255 (TDIAGTT), and 274–277 (DTAG) each bind GTP. Ser234 provides a ligand contact to Mg(2+). Positions 249, 251, and 254 each coordinate K(+). Thr255 lines the Mg(2+) pocket. Lys451 lines the (6S)-5-formyl-5,6,7,8-tetrahydrofolate pocket.

It belongs to the TRAFAC class TrmE-Era-EngA-EngB-Septin-like GTPase superfamily. TrmE GTPase family. Homodimer. Heterotetramer of two MnmE and two MnmG subunits. Requires K(+) as cofactor.

The protein resides in the cytoplasm. Its function is as follows. Exhibits a very high intrinsic GTPase hydrolysis rate. Involved in the addition of a carboxymethylaminomethyl (cmnm) group at the wobble position (U34) of certain tRNAs, forming tRNA-cmnm(5)s(2)U34. This Aromatoleum aromaticum (strain DSM 19018 / LMG 30748 / EbN1) (Azoarcus sp. (strain EbN1)) protein is tRNA modification GTPase MnmE.